Here is a 142-residue protein sequence, read N- to C-terminus: Universal stress protein C (142 aa).

It belongs to the universal stress protein A family.

It is found in the cytoplasm. In terms of biological role, required for resistance to DNA-damaging agents. This Salmonella typhimurium (strain LT2 / SGSC1412 / ATCC 700720) protein is Universal stress protein C (uspC).